We begin with the raw amino-acid sequence, 667 residues long: Long-chain fatty acid transport protein 3 (667 aa).

Residues 3–23 (ALLLLLPLLLLLPLLLKLDVW) form a helical membrane-spanning segment. A disordered region spans residues 114–144 (TGGRRGSGRGSTEEGARVAPPAGDAAARGTT). Residues 130–144 (RVAPPAGDAAARGTT) are compositionally biased toward low complexity. Residues 272–276 (TSGTT), histidine 315, threonine 412, aspartate 512, arginine 527, and lysine 619 contribute to the ATP site.

It belongs to the ATP-dependent AMP-binding enzyme family. As to expression, expressed at high levels in adrenal gland, testis and ovary. Expressed at lower levels in adult brain. Found in adrenal cortical cells, spermatocytes and interstitial cells of the testis, theca cells of the ovary, cerebral cortical neurons, and cerebellar Purkinje cells (at protein level).

It is found in the mitochondrion membrane. It catalyses the reaction a fatty acid(in) = a fatty acid(out). The catalysed reaction is a long-chain fatty acid + ATP + CoA = a long-chain fatty acyl-CoA + AMP + diphosphate. It carries out the reaction (5Z,8Z,11Z,14Z)-eicosatetraenoate + ATP + CoA = (5Z,8Z,11Z,14Z)-eicosatetraenoyl-CoA + AMP + diphosphate. The enzyme catalyses hexadecanoate + ATP + CoA = hexadecanoyl-CoA + AMP + diphosphate. It catalyses the reaction (9Z)-octadecenoate + ATP + CoA = (9Z)-octadecenoyl-CoA + AMP + diphosphate. The catalysed reaction is (9Z,12Z)-octadecadienoate + ATP + CoA = (9Z,12Z)-octadecadienoyl-CoA + AMP + diphosphate. It carries out the reaction a very long-chain fatty acid + ATP + CoA = a very long-chain fatty acyl-CoA + AMP + diphosphate. The enzyme catalyses tetracosanoate + ATP + CoA = tetracosanoyl-CoA + AMP + diphosphate. In terms of biological role, mainly functions as an acyl-CoA ligase catalyzing the ATP-dependent formation of fatty acyl-CoA using LCFA and very-long-chain fatty acids (VLCFA) as substrates. Can mediate the levels of long-chain fatty acids (LCFA) in the cell by facilitating their transport across membranes. This chain is Long-chain fatty acid transport protein 3 (Slc27a3), found in Mus musculus (Mouse).